The primary structure comprises 150 residues: D-aminoacyl-tRNA deacylase (150 aa).

A Gly-cisPro motif, important for rejection of L-amino acids motif is present at residues 138-139; it reads GP.

This sequence belongs to the DTD family. As to quaternary structure, homodimer.

The protein localises to the cytoplasm. It catalyses the reaction glycyl-tRNA(Ala) + H2O = tRNA(Ala) + glycine + H(+). It carries out the reaction a D-aminoacyl-tRNA + H2O = a tRNA + a D-alpha-amino acid + H(+). Functionally, an aminoacyl-tRNA editing enzyme that deacylates mischarged D-aminoacyl-tRNAs. Also deacylates mischarged glycyl-tRNA(Ala), protecting cells against glycine mischarging by AlaRS. Acts via tRNA-based rather than protein-based catalysis; rejects L-amino acids rather than detecting D-amino acids in the active site. By recycling D-aminoacyl-tRNA to D-amino acids and free tRNA molecules, this enzyme counteracts the toxicity associated with the formation of D-aminoacyl-tRNA entities in vivo and helps enforce protein L-homochirality. The sequence is that of D-aminoacyl-tRNA deacylase from Flavobacterium johnsoniae (strain ATCC 17061 / DSM 2064 / JCM 8514 / BCRC 14874 / CCUG 350202 / NBRC 14942 / NCIMB 11054 / UW101) (Cytophaga johnsonae).